We begin with the raw amino-acid sequence, 245 residues long: Orotidine 5'-phosphate decarboxylase (245 aa).

Residues D22, K44, 71–80 (DLKFHDIPNT), T131, R192, Q201, G221, and R222 each bind substrate. K73 acts as the Proton donor in catalysis.

It belongs to the OMP decarboxylase family. Type 1 subfamily. As to quaternary structure, homodimer.

The catalysed reaction is orotidine 5'-phosphate + H(+) = UMP + CO2. The protein operates within pyrimidine metabolism; UMP biosynthesis via de novo pathway; UMP from orotate: step 2/2. In terms of biological role, catalyzes the decarboxylation of orotidine 5'-monophosphate (OMP) to uridine 5'-monophosphate (UMP). This Shigella dysenteriae serotype 1 (strain Sd197) protein is Orotidine 5'-phosphate decarboxylase.